A 284-amino-acid polypeptide reads, in one-letter code: Efem/EfeO family lipoprotein (284 aa).

The first 17 residues, 1 to 17 (MKKLTTLLLASTLLIAA), serve as a signal peptide directing secretion. Residue C18 is the site of N-palmitoyl cysteine attachment. C18 is lipidated: S-diacylglycerol cysteine.

It belongs to the EfeM/EfeO family.

It localises to the cell membrane. This is Efem/EfeO family lipoprotein from Staphylococcus aureus (strain USA300).